We begin with the raw amino-acid sequence, 251 residues long: Probable transcriptional regulatory protein NFA_37020 (251 aa).

Belongs to the TACO1 family.

The protein localises to the cytoplasm. The sequence is that of Probable transcriptional regulatory protein NFA_37020 from Nocardia farcinica (strain IFM 10152).